The sequence spans 430 residues: Type 3 secretion system ATPase (430 aa).

162-167 serves as a coordination point for ATP; the sequence is GCGKTF.

This sequence belongs to the ATPase alpha/beta chains family. T3SS ATPase subfamily. As to quaternary structure, the core secretion machinery of the T3SS is composed of approximately 20 different proteins, including cytoplasmic components, a base, an export apparatus and a needle. This subunit is part of the cytosolic complex. Forms homohexamers. Interacts directly with MxiN/SctL (stator protein) and Spa13/SctO (stalk protein). Can form a soluble complex with Spa33/SctQ, MxiN/SctL and MxiK/SctK.

The protein resides in the cytoplasm. It carries out the reaction ATP + H2O + cellular proteinSide 1 = ADP + phosphate + cellular proteinSide 2.. Oligomerization increases ATPase activity. Monomeric forms exhibit low-level ATPase activity by forming short-lived oligomers with active site contributions from at least two protomers. In contrast, oligomers exhibit enhanced ATP hydrolysis rates that likely result from multiple preformed active sites within the oligomeric complex. Oligomerization is important for both enzyme activation and T3SS function. Activity is regulated by MxiN/SctL, which differentially regulates the activity of the monomer and the oligomer: it up-regulates the ATPase activity of the monomer, while it down-regulates the activity of the oligomer. ATPase component of the type III secretion system (T3SS), also called injectisome, which is used to inject bacterial effector proteins into eukaryotic host cells. Acts as a molecular motor to provide the energy that is required for the export of proteins. Required for type III secretion apparatus (T3SA) formation, proper protein secretion, host cell invasion and virulence. May play a critical role in T3SS substrate recognition, disassembly of the effector/chaperone complex and unfolding of the effector in an ATP-dependent manner prior to secretion. This is Type 3 secretion system ATPase from Shigella flexneri.